Consider the following 327-residue polypeptide: Tryptophan--tRNA ligase (327 aa).

ATP contacts are provided by residues Gln9–Ser11 and Gly17–Asn18. A 'HIGH' region motif is present at residues Pro10–Asn18. Asp132 contacts L-tryptophan. Residues Gly144–Asp146, Ile183, and Lys192–Ser196 contribute to the ATP site. The short motif at Lys192 to Ser196 is the 'KMSKS' region element.

Belongs to the class-I aminoacyl-tRNA synthetase family. Homodimer.

The protein resides in the cytoplasm. The enzyme catalyses tRNA(Trp) + L-tryptophan + ATP = L-tryptophyl-tRNA(Trp) + AMP + diphosphate + H(+). Catalyzes the attachment of tryptophan to tRNA(Trp). The chain is Tryptophan--tRNA ligase from Caldanaerobacter subterraneus subsp. tengcongensis (strain DSM 15242 / JCM 11007 / NBRC 100824 / MB4) (Thermoanaerobacter tengcongensis).